The following is a 344-amino-acid chain: Phosphoribosylformylglycinamidine cyclo-ligase (344 aa).

The protein belongs to the AIR synthase family.

Its subcellular location is the cytoplasm. It catalyses the reaction 2-formamido-N(1)-(5-O-phospho-beta-D-ribosyl)acetamidine + ATP = 5-amino-1-(5-phospho-beta-D-ribosyl)imidazole + ADP + phosphate + H(+). It participates in purine metabolism; IMP biosynthesis via de novo pathway; 5-amino-1-(5-phospho-D-ribosyl)imidazole from N(2)-formyl-N(1)-(5-phospho-D-ribosyl)glycinamide: step 2/2. The sequence is that of Phosphoribosylformylglycinamidine cyclo-ligase from Haemophilus influenzae (strain PittGG).